We begin with the raw amino-acid sequence, 689 residues long: FAST kinase domain-containing protein 2, mitochondrial (689 aa).

2 positions are modified to phosphoserine: Ser-113 and Ser-126. In terms of domain architecture, RAP spans 617-674 (VAVLCVPKSVYCLNSCHPRGLMAMKIRHLNVMGFHVILIHNWELKKLKMEDAVTFVRK).

Belongs to the FAST kinase family. As to quaternary structure, monomer. Found in a complex with GRSF1, DDX28, DHX30 and FASTKD5. Associates with the 16S mitochondrial rRNA (16S mt-rRNA). Forms a regulatory protein-RNA complex, consisting of RCC1L, NGRN, RPUSD3, RPUSD4, TRUB2, FASTKD2 and 16S mt-rRNA. In terms of tissue distribution, ubiquitously expressed. Expression detected in spleen, testis, colon, heart, smooth muscle, kidney, brain, lung, liver, brown and white adipose tissue with highest expression in testis, heart and smooth muscle.

The protein localises to the mitochondrion matrix. The protein resides in the mitochondrion nucleoid. Plays an important role in assembly of the mitochondrial large ribosomal subunit. As a component of a functional protein-RNA module, consisting of RCC1L, NGRN, RPUSD3, RPUSD4, TRUB2, FASTKD2 and 16S mitochondrial ribosomal RNA (16S mt-rRNA), controls 16S mt-rRNA abundance and is required for intra-mitochondrial translation. May play a role in mitochondrial apoptosis. The protein is FAST kinase domain-containing protein 2, mitochondrial (Fastkd2) of Mus musculus (Mouse).